An 89-amino-acid polypeptide reads, in one-letter code: UPF0223 protein BCE_4008 (89 aa).

Belongs to the UPF0223 family.

The chain is UPF0223 protein BCE_4008 from Bacillus cereus (strain ATCC 10987 / NRS 248).